We begin with the raw amino-acid sequence, 318 residues long: Carbamate kinase (318 aa).

Belongs to the carbamate kinase family.

It is found in the cytoplasm. The enzyme catalyses hydrogencarbonate + NH4(+) + ATP = carbamoyl phosphate + ADP + H2O + H(+). The protein operates within metabolic intermediate metabolism; carbamoyl phosphate degradation; CO(2) and NH(3) from carbamoyl phosphate: step 1/1. The sequence is that of Carbamate kinase (arcC) from Lentilactobacillus hilgardii (Lactobacillus hilgardii).